Here is a 689-residue protein sequence, read N- to C-terminus: MAVNDYEPGSMVITHVQGGGRDIIQYIPARSSYGTPPFVPPGPSPYVGTGMQEYRKLRSTLDKSHSELKKNLKNETLKEVDELKSEAGLPGKAVSANDIRDEKSIVDALMDAKAKSLKAIEDRPANLYTASDFPQKSESMYQSQLLASRKFYGEFLDRHMSELAKAYSADIYKAQIAILKQTSQELENKARSLEAEAQRAAAEVEADYKARKANVEKKVQSELDQAGNALPQLTNPTPEQWLERATQLVTQAIANKKKLQTANNALIAKAPNALEKQKATYNADLLVDEIASLQARLDKLNAETARRKEIARQAAIRAANTYAMPANGSVVATAAGRGLIQVAQGAASLAQAISDAIAVLGRVLASAPSVMAVGFASLTYSSRTAEQWQDQTPDSVRYALGMDAAKLGLPPSVNLNAVAKASGTVDLPMRLTNEARGNTTTLSVVSTDGVSVPKAVPVRMAAYNATTGLYEVTVPSTTAEAPPLILTWTPASPPGNQNPSSTTPVVPKPVPVYEGATLTPVKATPETYPGVITLPEDLIIGFPADSGIKPIYVMFRDPRDVPGAATGKGQPVSGNWLGAASQGEGAPIPSQIADKLRGKTFKNWRDFREQFWIAVANDPELSKQFNPGSLAVMRDGGAPYVRESEQAGGRIKIEIHHKVRIADGGGVYNMGNLVAVTPKRHIEIHKGGK.

Residues His-656, His-681, and His-685 each coordinate Zn(2+).

The protein belongs to the colicin/pyosin nuclease family. In terms of assembly, purified pyocin S2 makes up a complex of the two (large and small) proteins. The large protein, but not the pyocin complex, shows in vitro DNase activity.

In terms of biological role, causes breakdown of chromosomal DNA as well as complete inhibition of lipid synthesis in sensitive cells. This chain is Pyocin-S2 (pys2), found in Pseudomonas aeruginosa (strain ATCC 15692 / DSM 22644 / CIP 104116 / JCM 14847 / LMG 12228 / 1C / PRS 101 / PAO1).